Reading from the N-terminus, the 106-residue chain is Small ribosomal subunit protein bS20 (106 aa).

Basic residues predominate over residues 1–32 (MAQKKPKRNLSALKRHRQSLKRRLRNKAKKSA). The disordered stretch occupies residues 1–33 (MAQKKPKRNLSALKRHRQSLKRRLRNKAKKSAI).

This sequence belongs to the bacterial ribosomal protein bS20 family.

In terms of biological role, binds directly to 16S ribosomal RNA. The chain is Small ribosomal subunit protein bS20 (rpsT) from Thermus thermophilus (strain ATCC BAA-163 / DSM 7039 / HB27).